A 239-amino-acid chain; its full sequence is Purine nucleoside phosphorylase DeoD-type (239 aa).

Histidine 5 contacts a purine D-ribonucleoside. Glycine 21 and arginine 25 together coordinate phosphate. The residue at position 27 (lysine 27) is an N6-acetyllysine. Phosphate contacts are provided by residues arginine 44 and 88 to 91 (RVGS). A purine D-ribonucleoside contacts are provided by residues 180–182 (EME) and 204–205 (SD). Catalysis depends on aspartate 205, which acts as the Proton donor.

It belongs to the PNP/UDP phosphorylase family. In terms of assembly, homohexamer; trimer of homodimers.

The enzyme catalyses a purine D-ribonucleoside + phosphate = a purine nucleobase + alpha-D-ribose 1-phosphate. The catalysed reaction is a purine 2'-deoxy-D-ribonucleoside + phosphate = a purine nucleobase + 2-deoxy-alpha-D-ribose 1-phosphate. Catalyzes the reversible phosphorolytic breakdown of the N-glycosidic bond in the beta-(deoxy)ribonucleoside molecules, with the formation of the corresponding free purine bases and pentose-1-phosphate. The sequence is that of Purine nucleoside phosphorylase DeoD-type from Shigella dysenteriae serotype 1 (strain Sd197).